The primary structure comprises 575 residues: Epsin-1 (575 aa).

The a 1,2-diacyl-sn-glycero-3-phospho-(1D-myo-inositol-4,5-bisphosphate) site is built by arginine 8, lysine 11, arginine 25, asparagine 30, arginine 63, and histidine 73. Residues 12-144 (NIVHNYSEAE…RDEDRLREER (133 aa)) enclose the ENTH domain. The segment at 149–186 (KTKEKLAQTATASSAAVGSGPPPEAEQAWPQSSGEEEL) is disordered. Low complexity predominate over residues 157–167 (TATASSAAVGS). UIM domains are found at residues 183 to 202 (EEEL…ADQP), 208 to 227 (EDDV…HDKE), and 233 to 252 (GDDL…TGGK). Disordered regions lie at residues 264–283 (FTTP…ASVP) and 293–575 (SDPW…PFLL). Repeat copies occupy residues 274–276 (DPW), 294–296 (DPW), 306–308 (DPW), 319–321 (DPW), 332–334 (DPW), 349–351 (DPW), 367–369 (DPW), and 377–379 (DPW). Residues 274–379 (DPWGGPASVP…APAPAFSDPW (106 aa)) are 8 X 3 AA repeats of D-P-W. The span at 306–316 (DPWGGAAPTPA) shows a compositional bias: low complexity. The span at 333 to 346 (PWGGTPAPAAGEGP) shows a compositional bias: low complexity. Residues 367–379 (DPWAPAPAFSDPW) are compositionally biased toward low complexity. Serine 382 carries the phosphoserine modification. The [DE]-X(1,2)-F-X-X-[FL]-X-X-X-R motif motif lies at 401–410 (DEFSDFDRLR). 2 positions are modified to phosphoserine: serine 418 and serine 419. Residue threonine 420 is modified to Phosphothreonine. 3 positions are modified to phosphoserine: serine 434, serine 446, and serine 453. Residues 453–467 (SPPPAATPTPTPPTR) show a composition bias toward pro residues. 3 positions are modified to phosphothreonine: threonine 459, threonine 463, and threonine 469. Serine 472 is modified (phosphoserine). Threonine 493 carries the phosphothreonine modification. Tandem repeats lie at residues 501-503 (NPF) and 517-519 (NPF). The 3 X 3 AA repeats of N-P-F stretch occupies residues 501 to 573 (NPFLPSGAPA…GPPAPNTNPF (73 aa)). Arginine 533 carries the omega-N-methylarginine modification. The segment covering 556-569 (GLPPMMPPGPPAPN) has biased composition (pro residues). Repeat 3 spans residues 571–573 (NPF).

This sequence belongs to the epsin family. Monomer. Binds ITSN1. Binds clathrin, ZBTB16/ZNF145, AP2A1 and AP2A2. Binds ubiquitinated proteins. Interacts with RALBP1 in a complex also containing NUMB and TFAP2A during interphase and mitosis. Interacts with AP2B1. Interacts with UBQLN2. Interacts with REPS2; the interaction is direct. Interacts with EPS15; the interaction is direct. Interacts with ENTREP1. In terms of processing, ubiquitinated. Phosphorylated on serine and/or threonine residues in mitotic cells. Phosphorylation reduces interaction with REPS2, AP-2 and the membrane fraction. Depolarization of synaptosomes results in dephosphorylation. As to expression, ubiquitously expressed. Detected in liver, spleen and testis, and weakly in lung and thymus (at protein level).

Its subcellular location is the cytoplasm. The protein localises to the cell membrane. The protein resides in the nucleus. It localises to the membrane. It is found in the clathrin-coated pit. Its function is as follows. Binds to membranes enriched in phosphatidylinositol 4,5-bisphosphate (PtdIns(4,5)P2). Modifies membrane curvature and facilitates the formation of clathrin-coated invaginations. Regulates receptor-mediated endocytosis. The sequence is that of Epsin-1 (Epn1) from Rattus norvegicus (Rat).